A 287-amino-acid polypeptide reads, in one-letter code: MSIVNLSSYHFATIEDTAAWRPFVTERCNALGLKGTILLAPEGINLFVAGTRENTDAFIHYIRHDALFEGKFVDLQFKESLSDKQPFTRMLVKLKREIITMKKPAIRPELGRAPFVDAPTLKHWLDRGHDDQGRPVVMLDTRNAFEVDVGTFDNALDYRITKFSEFPEVIEQNRADLEGKTVVSFCTGGIRCEKAAIHMKEVGIENVYQLEGGILKYFEEVGGAHYHGDCFVFDYRTALNPQLEPSKTTQCFGCRAVVPPQAQESPLYVAGKTCPECHPDSKAARAA.

Positions 132-226 (QGRPVVMLDT…YFEEVGGAHY (95 aa)) constitute a Rhodanese domain. C186 acts as the Cysteine persulfide intermediate in catalysis.

The protein belongs to the TrhO family.

It catalyses the reaction uridine(34) in tRNA + AH2 + O2 = 5-hydroxyuridine(34) in tRNA + A + H2O. Catalyzes oxygen-dependent 5-hydroxyuridine (ho5U) modification at position 34 in tRNAs. In Paraburkholderia phytofirmans (strain DSM 17436 / LMG 22146 / PsJN) (Burkholderia phytofirmans), this protein is tRNA uridine(34) hydroxylase.